Here is a 246-residue protein sequence, read N- to C-terminus: Ribonuclease PH (246 aa).

Residues 1–33 (MTPPKLPVREGRDALTPRPVSVQRGVNPHAPGS) form a disordered region. Residues Arg90 and 128 to 130 (GTR) contribute to the phosphate site.

This sequence belongs to the RNase PH family. As to quaternary structure, homohexameric ring arranged as a trimer of dimers.

It catalyses the reaction tRNA(n+1) + phosphate = tRNA(n) + a ribonucleoside 5'-diphosphate. Functionally, phosphorolytic 3'-5' exoribonuclease that plays an important role in tRNA 3'-end maturation. Removes nucleotide residues following the 3'-CCA terminus of tRNAs; can also add nucleotides to the ends of RNA molecules by using nucleoside diphosphates as substrates, but this may not be physiologically important. Probably plays a role in initiation of 16S rRNA degradation (leading to ribosome degradation) during starvation. In Deinococcus radiodurans (strain ATCC 13939 / DSM 20539 / JCM 16871 / CCUG 27074 / LMG 4051 / NBRC 15346 / NCIMB 9279 / VKM B-1422 / R1), this protein is Ribonuclease PH.